A 769-amino-acid polypeptide reads, in one-letter code: Amino-acid acetyltransferase, mitochondrial (769 aa).

Residues 150-172 form a disordered region; that stretch reads LKASPAKSGQEPTESPKESISAS. The span at 159-172 shows a compositional bias: polar residues; the sequence is QEPTESPKESISAS. Residues 590–759 form the N-acetyltransferase domain; it reads MQPRLGLNDP…YEAVCRSIQP (170 aa).

The protein belongs to the acetyltransferase family.

Its subcellular location is the mitochondrion. It carries out the reaction L-glutamate + acetyl-CoA = N-acetyl-L-glutamate + CoA + H(+). It functions in the pathway amino-acid biosynthesis; L-arginine biosynthesis; N(2)-acetyl-L-ornithine from L-glutamate: step 1/4. Its function is as follows. N-acetylglutamate synthase involved in arginine biosynthesis. The chain is Amino-acid acetyltransferase, mitochondrial (arg2) from Penicillium rubens (strain ATCC 28089 / DSM 1075 / NRRL 1951 / Wisconsin 54-1255) (Penicillium chrysogenum).